Consider the following 393-residue polypeptide: S-adenosylmethionine synthase 2 (393 aa).

Glutamate 9 contributes to the Mg(2+) binding site. Histidine 15 is an ATP binding site. Residue glutamate 43 coordinates K(+). The L-methionine site is built by glutamate 56 and glutamine 99. ATP is bound by residues 167-169, 235-238, aspartate 246, 252-253, alanine 269, lysine 273, and lysine 277; these read DGK, SGRF, and RK. Aspartate 246 is a binding site for L-methionine. Lysine 277 provides a ligand contact to L-methionine.

This sequence belongs to the AdoMet synthase family. As to quaternary structure, homotetramer. It depends on Mn(2+) as a cofactor. Requires Mg(2+) as cofactor. The cofactor is Co(2+). K(+) serves as cofactor.

The protein resides in the cytoplasm. The catalysed reaction is L-methionine + ATP + H2O = S-adenosyl-L-methionine + phosphate + diphosphate. It functions in the pathway amino-acid biosynthesis; S-adenosyl-L-methionine biosynthesis; S-adenosyl-L-methionine from L-methionine: step 1/1. Functionally, catalyzes the formation of S-adenosylmethionine from methionine and ATP. The reaction comprises two steps that are both catalyzed by the same enzyme: formation of S-adenosylmethionine (AdoMet) and triphosphate, and subsequent hydrolysis of the triphosphate. In Populus trichocarpa (Western balsam poplar), this protein is S-adenosylmethionine synthase 2 (METK2).